The primary structure comprises 198 residues: Synaptobrevin homolog YKT6-A (198 aa).

In terms of domain architecture, Longin spans 8 to 127 (VLYKGENKVH…IQYNALDSYL (120 aa)). Positions 138–198 (PMSKVQAELD…RKQNSCCDIM (61 aa)) constitute a v-SNARE coiled-coil homology domain. The S-palmitoyl cysteine moiety is linked to residue Cys194. Position 195 is a cysteine methyl ester (Cys195). Residue Cys195 is the site of S-farnesyl cysteine attachment. The propeptide at 196 to 198 (DIM) is removed in mature form.

Belongs to the synaptobrevin family. Palmitoylated; catalyzes its own palmitoylation. Palmitoylation is required for Golgi targeting. Post-translationally, farnesylation is required for Golgi targeting.

Its subcellular location is the cytoplasm. It localises to the cytosol. It is found in the cytoplasmic vesicle membrane. The protein localises to the golgi apparatus membrane. In terms of biological role, vesicular soluble NSF attachment protein receptor (v-SNARE) mediating vesicle docking and fusion to a specific acceptor cellular compartment. Functions in endoplasmic reticulum to Golgi transport; as part of a SNARE complex composed of GOSR1, GOSR2 and STX5. Functions in early/recycling endosome to TGN transport; as part of a SNARE complex composed of BET1L, GOSR1 and STX5. Has a S-palmitoyl transferase activity. This is Synaptobrevin homolog YKT6-A (ykt6-a) from Xenopus laevis (African clawed frog).